Consider the following 371-residue polypeptide: MYSENPIKRRASTRIYVGDVPIGDGAPIAVQSMTNTLTTDVDATVAQIRALENVGADIVRVSVPTMDAAEAFKLIKQQSNIPLIADIHFDYRIALKVAEYGVDCLRINPGNIGNEERIRSVVECARDKNIPIRIGINGGSLEKDLMDKYKEPTPEALLESAMRHVDILDRLNFDQFKVSVKASDVFLAVEAYRLLAKQIVQPLHLGITEAGGARSGSVKSAVGLGMLLAEGIGDTLRVSLAADPVEEIKVGFDILKSLRIRSRGINFIACPSCSRQEFDVISTVNELERRLEDIVTPMDVSIIGCVVNGPGEALVSDIGLTGGARKSGYFDDGVRQKERFDNDNIVDSLEAKIRAKASIINGRIPAQDINK.

[4Fe-4S] cluster-binding residues include C270, C273, C305, and E312.

The protein belongs to the IspG family. Requires [4Fe-4S] cluster as cofactor.

The enzyme catalyses (2E)-4-hydroxy-3-methylbut-2-enyl diphosphate + oxidized [flavodoxin] + H2O + 2 H(+) = 2-C-methyl-D-erythritol 2,4-cyclic diphosphate + reduced [flavodoxin]. The protein operates within isoprenoid biosynthesis; isopentenyl diphosphate biosynthesis via DXP pathway; isopentenyl diphosphate from 1-deoxy-D-xylulose 5-phosphate: step 5/6. Its function is as follows. Converts 2C-methyl-D-erythritol 2,4-cyclodiphosphate (ME-2,4cPP) into 1-hydroxy-2-methyl-2-(E)-butenyl 4-diphosphate. The polypeptide is 4-hydroxy-3-methylbut-2-en-1-yl diphosphate synthase (flavodoxin) (Shewanella sediminis (strain HAW-EB3)).